The primary structure comprises 156 residues: Ribosome maturation factor RimP (156 aa).

It belongs to the RimP family.

It localises to the cytoplasm. Functionally, required for maturation of 30S ribosomal subunits. The chain is Ribosome maturation factor RimP from Bacillus cereus (strain B4264).